The following is a 734-amino-acid chain: Photosystem I P700 chlorophyll a apoprotein A2 (734 aa).

The next 8 membrane-spanning stretches (helical) occupy residues 46–69 (IFASHFGQLAIIFLWTSGNLFHVA), 135–158 (LYAGALFLLFLSVIFLIAGRLHLQ), 175–199 (LNHHLSGLFGVSSLAWTGHLVHVAI), 273–291 (MAHHHLAIALVFSIAGHMY), 330–353 (LHFQLGLALASLGVITSLVAQHMY), 369–395 (AALYTHHQYIAGFIMTGAFAHGAIFLI), 417–439 (AIISHLSWVSLLLGFHTLGLYVH), and 517–535 (FLVHHAIALGLHTTTLILV). The [4Fe-4S] cluster site is built by cysteine 559 and cysteine 568. A run of 2 helical transmembrane segments spans residues 575–596 (AFYLAVFWMLNTIGWVTFYWHW) and 643–665 (LSVWAWMFLFGHLVWATGFMFLI). Residues histidine 654, methionine 662, and tyrosine 670 each coordinate chlorophyll a. A phylloquinone-binding site is contributed by tryptophan 671. A helical membrane pass occupies residues 707-727 (LVGLAHFSVGYIFTYAAFLIA).

The protein belongs to the PsaA/PsaB family. In terms of assembly, the PsaA/B heterodimer binds the P700 chlorophyll special pair and subsequent electron acceptors. PSI consists of a core antenna complex that captures photons, and an electron transfer chain that converts photonic excitation into a charge separation. The eukaryotic PSI reaction center is composed of at least 11 subunits. P700 is a chlorophyll a/chlorophyll a' dimer, A0 is one or more chlorophyll a, A1 is one or both phylloquinones and FX is a shared 4Fe-4S iron-sulfur center. is required as a cofactor.

Its subcellular location is the plastid. The protein localises to the chloroplast thylakoid membrane. The enzyme catalyses reduced [plastocyanin] + hnu + oxidized [2Fe-2S]-[ferredoxin] = oxidized [plastocyanin] + reduced [2Fe-2S]-[ferredoxin]. Functionally, psaA and PsaB bind P700, the primary electron donor of photosystem I (PSI), as well as the electron acceptors A0, A1 and FX. PSI is a plastocyanin-ferredoxin oxidoreductase, converting photonic excitation into a charge separation, which transfers an electron from the donor P700 chlorophyll pair to the spectroscopically characterized acceptors A0, A1, FX, FA and FB in turn. Oxidized P700 is reduced on the lumenal side of the thylakoid membrane by plastocyanin. This Pinus thunbergii (Japanese black pine) protein is Photosystem I P700 chlorophyll a apoprotein A2.